Reading from the N-terminus, the 231-residue chain is 7-cyano-7-deazaguanine synthase (231 aa).

Phenylalanine 8–leucine 18 lines the ATP pocket. Cysteine 188, cysteine 197, cysteine 200, and cysteine 203 together coordinate Zn(2+).

It belongs to the QueC family. Requires Zn(2+) as cofactor.

It catalyses the reaction 7-carboxy-7-deazaguanine + NH4(+) + ATP = 7-cyano-7-deazaguanine + ADP + phosphate + H2O + H(+). The protein operates within purine metabolism; 7-cyano-7-deazaguanine biosynthesis. Functionally, catalyzes the ATP-dependent conversion of 7-carboxy-7-deazaguanine (CDG) to 7-cyano-7-deazaguanine (preQ(0)). This Cronobacter sakazakii (strain ATCC BAA-894) (Enterobacter sakazakii) protein is 7-cyano-7-deazaguanine synthase.